Reading from the N-terminus, the 602-residue chain is Raftlin (602 aa).

A lipid anchor (N-myristoyl glycine) is attached at G2. C3 carries S-palmitoyl cysteine lipidation. A compositionally biased stretch (polar residues) spans 178-195 (TPASNNSVQSRDNKNVSN). Disordered stretches follow at residues 178-282 (TPAS…RCSK), 451-495 (KKES…EVTE), and 524-567 (NETA…QSAP). Composition is skewed to basic and acidic residues over residues 197–209 (PEDHASLDGEKID) and 244–265 (PDCKSAKGSKEQHEHPGGREAP). A compositionally biased stretch (basic residues) spans 468 to 477 (KPMKKSRKTK).

The protein belongs to the raftlin family.

Its subcellular location is the cell membrane. In terms of biological role, may play a pivotal role in the formation and/or maintenance of lipid rafts. May regulate B-cell antigen receptor-mediated signaling. The protein is Raftlin (RFTN1) of Gallus gallus (Chicken).